A 434-amino-acid chain; its full sequence is Tol-Pal system protein TolB (434 aa).

The N-terminal stretch at 1–21 is a signal peptide; sequence MIVRRALALAALALAASPALA. Positions 411–434 are disordered; sequence GDRQTPVTSGKTDLAAPAWGPLAP.

This sequence belongs to the TolB family. The Tol-Pal system is composed of five core proteins: the inner membrane proteins TolA, TolQ and TolR, the periplasmic protein TolB and the outer membrane protein Pal. They form a network linking the inner and outer membranes and the peptidoglycan layer.

The protein localises to the periplasm. Functionally, part of the Tol-Pal system, which plays a role in outer membrane invagination during cell division and is important for maintaining outer membrane integrity. The sequence is that of Tol-Pal system protein TolB from Anaeromyxobacter sp. (strain K).